A 613-amino-acid polypeptide reads, in one-letter code: MDLTASLEDDQREKLRQYTEFTHQQDYEVAIGTLASLNWNLEQAIEAHLMQEDKNDDEDPEILETIPAAASGRNAGASSSSRFEPEVINIEDDEMPATRGRRRGRAVTPDETTTVDNQVKRLRIDDGSSSSSNGAATHHRGAAIPRQKRGQATEPTPSSSGSSSASFSSRRGTRANPVPPPNQEPAHPESARQNGGILASRHNNHNNQQNNHHHHHQRIPINPRRVDVFNVDSDEDDDSMAIAYEDDDDGVHEVHHSEVVARGSGPPNGRIPMIPDGFSSVSDALRNFVAIFSDRFCSTPQTQAFMPPFYTEPLPAAVKEAFDHPNSEHRRPLLFYINHDRSIAANIFASQVLCSETVSTLIRHQYVLFPWDITSDSNLMLFLEYLQAANMGDVRTIIQRLAMSKIESFPLMAIVVKERNSYRLVDYCRGTDTSDQVMEKLLSGVSEYSDIRMNEQSERREREEREAIRNQQEAEYKASLAADKARMEAKQQEIEEQRLEEERKLREEEEECVRRQTVASTVPEEPPASAPLAEIINVKFRLPEGGQDMRRFRRLESIQTLINYLSSKGYSPDKFKYFNSDFPKKEITRHFDLSHNFADTKWPAREQIFVEEI.

Disordered stretches follow at residues 67-223 and 453-472; these read PAAA…PINP and MNEQ…RNQQ. The segment covering 68–82 has biased composition (low complexity); the sequence is AAASGRNAGASSSSR. Residues 137–149 show a composition bias toward basic residues; the sequence is THHRGAAIPRQKR. A compositionally biased stretch (low complexity) spans 158-169; the sequence is SSSGSSSASFSS. A coiled-coil region spans residues 452–517; sequence RMNEQSERRE…EEEECVRRQT (66 aa). The 80-residue stretch at 531-610 folds into the UBX domain; sequence PLAEIINVKF…KWPAREQIFV (80 aa). The Interaction with cdc-48 motif lies at 582 to 584; it reads FPK.

In terms of assembly, forms a complex composed of ubxn-3, cdc-48.1, ufd-1 and npl-4.1. Forms a complex composed of ubxn-3, cdc-48.1 and/or cdc-48.2 and substrate cdt-1. Interacts (via FPK motif) with cdc-48.1 (via N-terminus) and cdc-48.2 (via N-terminus). Interacts (via N-terminus) with cdt-1 and ubiquitinated protein substrates; the interaction is cdc-48-independent. May interact with npl-4.1. As to expression, expressed in the germline (at protein level). Expressed in spermatocytes but not in mature sperm (at protein level). Expressed in the spermatheca and nerve cells.

The protein localises to the nucleus. Its subcellular location is the cytoplasm. It is found in the perinuclear region. The protein resides in the chromosome. Ubiquitin-binding protein which acts as an adapter for ATPase cdc-48.1 and/or cdc-48.2, conferring substrate specificity. Together with ubxn-1 and ubxn-2, plays a role in hermaphrodite spermatogenesis probably by promoting the degradation of sex determination terminal factor tra-1. During mitosis, ensures the degradation of DNA licensing factor cdt-1 and the disassembly of the DNA replication CMG helicase complex by promoting the dissociation from chromatin of several of its components including cdc-45 and sld-5. In Caenorhabditis elegans, this protein is UBX domain-containing protein 3.